Here is a 277-residue protein sequence, read N- to C-terminus: Insertion element IS407 uncharacterized 31.7 kDa protein (277 aa).

An Integrase catalytic domain is found at 103 to 264; that stretch reads LPGAPNEVWS…APSEFAAKHR (162 aa).

The protein is Insertion element IS407 uncharacterized 31.7 kDa protein of Burkholderia multivorans (strain ATCC 17616 / 249).